The sequence spans 338 residues: Biotin synthase (338 aa).

In terms of domain architecture, Radical SAM core spans 46–270 (NEVQLSTLLS…VAVARITMPA (225 aa)). [4Fe-4S] cluster contacts are provided by cysteine 61, cysteine 65, and cysteine 68. Positions 105, 136, 196, and 274 each coordinate [2Fe-2S] cluster.

Belongs to the radical SAM superfamily. Biotin synthase family. Homodimer. [4Fe-4S] cluster serves as cofactor. The cofactor is [2Fe-2S] cluster.

It carries out the reaction (4R,5S)-dethiobiotin + (sulfur carrier)-SH + 2 reduced [2Fe-2S]-[ferredoxin] + 2 S-adenosyl-L-methionine = (sulfur carrier)-H + biotin + 2 5'-deoxyadenosine + 2 L-methionine + 2 oxidized [2Fe-2S]-[ferredoxin]. It functions in the pathway cofactor biosynthesis; biotin biosynthesis; biotin from 7,8-diaminononanoate: step 2/2. Functionally, catalyzes the conversion of dethiobiotin (DTB) to biotin by the insertion of a sulfur atom into dethiobiotin via a radical-based mechanism. The polypeptide is Biotin synthase (Rhizorhabdus wittichii (strain DSM 6014 / CCUG 31198 / JCM 15750 / NBRC 105917 / EY 4224 / RW1) (Sphingomonas wittichii)).